The primary structure comprises 261 residues: MKTLATIGDNCVDIYPQLNKAFSGGNAVNVAVYCTRYGIQPGCITWVGDDDYGTKLKQDLARMGVDISHVHTKHGVTAQTQVELHDNDRVFGDYTEGVMADFALSEEDYAWLAQYDIVHAAIWGHAEDAFPQLHAAGKLTAFDFSDKWDSPLWQTLVPHLDFAFASAPQEDEALRLKMKAIVARGAGTVIVTLGENGSIAWDGAQFWRQAPEPVTVIDTMGAGDSFIAGFLCGWSAGMTLPQAMAQGTACAAKTIQYHGAW.

It belongs to the carbohydrate kinase PfkB family. Monomer.

It catalyses the reaction N(6)-(D-fructosyl)-L-lysine + ATP = N(6)-(6-phospho-D-fructosyl)-L-lysine + ADP + H(+). The protein operates within carbohydrate metabolism; fructoselysine degradation; D-glucose 6-phosphate and lysine from fructoselysine: step 1/2. In terms of biological role, catalyzes the ATP-dependent phosphorylation of fructoselysine to fructoselysine 6-phosphate. May function in a fructoselysine degradation pathway that allows S.flexneri to grow on fructoselysine or psicoselysine. The polypeptide is Fructoselysine 6-kinase (frlD) (Shigella flexneri).